Reading from the N-terminus, the 476-residue chain is Inosine-5'-monophosphate dehydrogenase (476 aa).

2 consecutive CBS domains span residues 92-150 (MIEN…IADV) and 151-207 (MTKD…PNAS). NAD(+) contacts are provided by residues D244 and 294–296 (GVG). K(+)-binding residues include G296 and G298. S299 is a binding site for IMP. Residue C301 coordinates K(+). The Thioimidate intermediate role is filled by C301. IMP is bound by residues 334 to 336 (DGG), 357 to 358 (GS), 381 to 385 (YRGMA), and E413. 2 residues coordinate K(+): E467 and S468.

This sequence belongs to the IMPDH/GMPR family. In terms of assembly, homotetramer. K(+) is required as a cofactor.

It carries out the reaction IMP + NAD(+) + H2O = XMP + NADH + H(+). It participates in purine metabolism; XMP biosynthesis via de novo pathway; XMP from IMP: step 1/1. Mycophenolic acid (MPA) is a non-competitive inhibitor that prevents formation of the closed enzyme conformation by binding to the same site as the amobile flap. In contrast, mizoribine monophosphate (MZP) is a competitive inhibitor that induces the closed conformation. MPA is a potent inhibitor of mammalian IMPDHs but a poor inhibitor of the bacterial enzymes. MZP is a more potent inhibitor of bacterial IMPDH. In terms of biological role, catalyzes the conversion of inosine 5'-phosphate (IMP) to xanthosine 5'-phosphate (XMP), the first committed and rate-limiting step in the de novo synthesis of guanine nucleotides, and therefore plays an important role in the regulation of cell growth. This Nitrosopumilus maritimus (strain SCM1) protein is Inosine-5'-monophosphate dehydrogenase.